Consider the following 536-residue polypeptide: MTAPKNSIDLSQYGIDDVNEVVYNPSYELLFSEETKAGLEGFDKGIVTELGAVNVDTGIFTGRSPKDKYIVRDDVTRDTVWWSDQGKNDNKAMTPETWDHLKGLVTTQLSGQRLFVVDTFCGADEATRLKVRFITQVAWQAHFVKNMFIRPTDAELENYEPDFVVMNGAKTVNDKWEEQGLNSENFVAFNLTEKIQLIGGTWYGGEMKKGMFSMMNYYLPLQGIASMHCSANVGEDGDTAIFFGLSGTGKTTLSTDPKRQLIGDDEHGWDDNGVFNFEGGCYAKTINLSKENEPDIYNAIRRDALLENVTVDANGKIDFDDNSKTENTRVSYPIHHIDNIVKPVSRAGHAKKVIFLTADAFGVLPPVAKLTPEQTEYYFLSGFTAKLAGTERGITEPTPTFSSCFGAAFLSLHPTQYAEVLHKRMDDAGAEAYLVNTGWNGTGKRISIKATRAIIDAILDGSIDNAETETVPFFNLEVPKVIAGVEGDILDPRNTYEDPSVWNDKAVDLAKRFVNNFDKFTDTDNGKALVAAGPQL.

The substrate site is built by arginine 63, tyrosine 203, and lysine 209. ATP-binding positions include lysine 209, histidine 228, and 244 to 252; that span reads GLSGTGKTT. 2 residues coordinate Mn(2+): lysine 209 and histidine 228. Aspartate 265 contributes to the Mn(2+) binding site. Residues glutamate 293, arginine 329, 445-446, and threonine 451 contribute to the ATP site; that span reads RI. Substrate is bound at residue arginine 329.

The protein belongs to the phosphoenolpyruvate carboxykinase (ATP) family. Monomer. The cofactor is Mn(2+).

The protein resides in the cytoplasm. The enzyme catalyses oxaloacetate + ATP = phosphoenolpyruvate + ADP + CO2. It functions in the pathway carbohydrate biosynthesis; gluconeogenesis. In terms of biological role, involved in the gluconeogenesis. Catalyzes the conversion of oxaloacetate (OAA) to phosphoenolpyruvate (PEP) through direct phosphoryl transfer between the nucleoside triphosphate and OAA. This is Phosphoenolpyruvate carboxykinase (ATP) from Colwellia psychrerythraea (strain 34H / ATCC BAA-681) (Vibrio psychroerythus).